Consider the following 308-residue polypeptide: Bifunctional protein FolD (308 aa).

NADP(+) contacts are provided by residues 171–173, Ser198, and Ile239; that span reads GRS.

This sequence belongs to the tetrahydrofolate dehydrogenase/cyclohydrolase family. Homodimer.

The catalysed reaction is (6R)-5,10-methylene-5,6,7,8-tetrahydrofolate + NADP(+) = (6R)-5,10-methenyltetrahydrofolate + NADPH. It catalyses the reaction (6R)-5,10-methenyltetrahydrofolate + H2O = (6R)-10-formyltetrahydrofolate + H(+). It participates in one-carbon metabolism; tetrahydrofolate interconversion. In terms of biological role, catalyzes the oxidation of 5,10-methylenetetrahydrofolate to 5,10-methenyltetrahydrofolate and then the hydrolysis of 5,10-methenyltetrahydrofolate to 10-formyltetrahydrofolate. The sequence is that of Bifunctional protein FolD from Borreliella burgdorferi (strain ZS7) (Borrelia burgdorferi).